Reading from the N-terminus, the 196-residue chain is MHPLSIEGAWSQEPVIHSDHRGRSHEWFRGESFRQAFGHDFPVAQVNVAVSHRGALRGIHYTEIPPGQAKYSVCVRGAGLDVVVDVRIGSPTFGRWEIVPMDAERNTAVYLTAGLGRAFLSLTDDATLVYLCSSGYAPAREHSVNPLDPDLGIAWPDDIEPLLSDRDENAPTLATAERLGLLPTYQAWQEQQQAQR.

Residues arginine 21, glutamate 26, 45 to 47 (QVN), and arginine 57 contribute to the substrate site. The active-site Proton acceptor is the histidine 60. Substrate is bound by residues lysine 70 and arginine 117. Tyrosine 130 acts as the Proton donor in catalysis. 2 residues coordinate substrate: glutamate 141 and arginine 166.

The protein belongs to the dTDP-4-dehydrorhamnose 3,5-epimerase family. As to quaternary structure, homodimer.

The catalysed reaction is dTDP-4-dehydro-6-deoxy-alpha-D-glucose = dTDP-4-dehydro-6-deoxy-alpha-D-allose. It participates in antibiotic biosynthesis. Its function is as follows. Involved in the biosynthesis of dTDP-6-deoxy-D-allose, an intermediate in the biosynthesis of mycinose, which is one of the two unusual sugars attached to the 16-membered macrolactone ring of the aglycone antibiotic chalcomycin. Catalyzes the conversion of dTDP-4-oxo-6-deoxyglucose to dTDP-4-oxo-6-deoxyallose, via a C-3 epimerization. The polypeptide is dTDP-4-dehydro-6-deoxyglucose 3-epimerase (Streptomyces bikiniensis).